Consider the following 192-residue polypeptide: Pyruvate kinase (192 aa).

Arginine 41 is a binding site for substrate. Positions 43, 45, 75, and 76 each coordinate K(+). Residue asparagine 43–histidine 46 coordinates ATP.

It belongs to the pyruvate kinase family. The cofactor is Mg(2+). Requires K(+) as cofactor.

It catalyses the reaction pyruvate + ATP = phosphoenolpyruvate + ADP + H(+). It participates in carbohydrate degradation; glycolysis; pyruvate from D-glyceraldehyde 3-phosphate: step 5/5. This is Pyruvate kinase (pyk) from Spiroplasma citri.